Consider the following 208-residue polypeptide: Proheparin-binding EGF-like growth factor (208 aa).

The first 19 residues, 1–19, serve as a signal peptide directing secretion; that stretch reads MKLLPSVVLKLLLAAVLSA. The propeptide occupies 20–62; the sequence is LVTGESLEQLRRGLAAGTSNPDPSTGSTDQLLRLGGGRDRKVR. Topologically, residues 20 to 160 are extracellular; sequence LVTGESLEQL…ENRLYTYDHT (141 aa). The tract at residues 34 to 55 is disordered; that stretch reads AAGTSNPDPSTGSTDQLLRLGG. Over residues 36–49 the composition is skewed to polar residues; it reads GTSNPDPSTGSTDQ. O-linked (GalNAc...) threonine glycans are attached at residues T75 and T85. The segment at 81–104 is disordered; the sequence is QALATPSKEEHGKRKKKGKGLGKK. The span at 93–102 shows a compositional bias: basic residues; that stretch reads KRKKKGKGLG. The region spanning 104–144 is the EGF-like domain; sequence KRDPCLRKYKDFCIHGECKYVKELRAPSCICHPGYHGERCH. 3 cysteine pairs are disulfide-bonded: C108/C121, C116/C132, and C134/C143. Residues 136–148 are toxin-binding domain; it reads PGYHGERCHGLSL. Positions 149 to 208 are cleaved as a propeptide — C-terminal; it reads PVENRLYTYDHTTILAVVAVVLSSVCLLVIVGLLMFRYHRRGGYDVENEEKVKLGMTNSH. A helical transmembrane segment spans residues 161–184; it reads TILAVVAVVLSSVCLLVIVGLLMF. Residues 185–208 lie on the Cytoplasmic side of the membrane; that stretch reads RYHRRGGYDVENEEKVKLGMTNSH.

Interacts with EGFR and ERBB4. Interacts with FBLN1. Post-translationally, O-glycosylated.

It localises to the secreted. The protein resides in the extracellular space. Its subcellular location is the cell membrane. Its function is as follows. Growth factor that mediates its effects via EGFR, ERBB2 and ERBB4. Required for normal cardiac valve formation and normal heart function. Promotes smooth muscle cell proliferation. May be involved in macrophage-mediated cellular proliferation. It is mitogenic for fibroblasts, but not endothelial cells. It is able to bind EGF receptor/EGFR with higher affinity than EGF itself and is a far more potent mitogen for smooth muscle cells than EGF. Also acts as a diphtheria toxin receptor. The chain is Proheparin-binding EGF-like growth factor (HBEGF) from Chlorocebus aethiops (Green monkey).